A 303-amino-acid chain; its full sequence is Probable 5-dehydro-4-deoxyglucarate dehydratase (303 aa).

The protein belongs to the DapA family.

It catalyses the reaction 5-dehydro-4-deoxy-D-glucarate + H(+) = 2,5-dioxopentanoate + CO2 + H2O. It participates in carbohydrate acid metabolism; D-glucarate degradation; 2,5-dioxopentanoate from D-glucarate: step 2/2. In Pseudomonas fluorescens (strain Pf0-1), this protein is Probable 5-dehydro-4-deoxyglucarate dehydratase.